A 478-amino-acid chain; its full sequence is Shikimate biosynthesis protein AroDE (478 aa).

Residues 1–208 (MLCTTISGPS…LKHHYFYNFA (208 aa)) are 3-dehydroquinate dehydratase. Residues serine 21, 29–31 (EMR), and 55–57 (AWK) each bind 3-dehydroquinate. Histidine 110 functions as the Proton donor/acceptor; for 3-dehydroquinate dehydratase activity in the catalytic mechanism. Residue lysine 133 is the Schiff-base intermediate with substrate; for 3-dehydroquinate dehydratase activity of the active site. 3-dehydroquinate-binding residues include arginine 171 and glutamine 196. Residues 209 to 478 (SLSAQSPICA…VLASLFSIAP (270 aa)) are shikimate 5-dehydrogenase. 226-228 (SIG) contributes to the shikimate binding site. Lysine 277 serves as the catalytic Proton acceptor; for shikimate dehydrogenase activity. Positions 298 and 313 each coordinate shikimate. NADP(+) contacts are provided by residues 337–341 (GAGGA), 360–362 (NRT), and glycine 435. A shikimate-binding site is contributed by glutamine 442.

In the N-terminal section; belongs to the type-I 3-dehydroquinase family. This sequence in the C-terminal section; belongs to the shikimate dehydrogenase family.

It carries out the reaction 3-dehydroquinate = 3-dehydroshikimate + H2O. The enzyme catalyses shikimate + NADP(+) = 3-dehydroshikimate + NADPH + H(+). It participates in metabolic intermediate biosynthesis; chorismate biosynthesis; chorismate from D-erythrose 4-phosphate and phosphoenolpyruvate: step 3/7. The protein operates within metabolic intermediate biosynthesis; chorismate biosynthesis; chorismate from D-erythrose 4-phosphate and phosphoenolpyruvate: step 4/7. Bifunctional enzyme that catalyzes two sequential steps of the aromatic amino acids biosynthetic pathway. In the first reaction, the AroD domain catalyzes the cis-dehydration of 3-dehydroquinate (DHQ) and introduces the first double bond of the aromatic ring to yield 3-dehydroshikimate; in the second reaction, the AroE domain catalyzes the reversible NADPH linked reduction of 3-dehydroshikimate (DHSA) to yield shikimate (SA). The sequence is that of Shikimate biosynthesis protein AroDE from Chlamydia trachomatis serovar D (strain ATCC VR-885 / DSM 19411 / UW-3/Cx).